Consider the following 353-residue polypeptide: Photosystem II protein D1 (353 aa).

The residue at position 2 (Thr-2) is an N-acetylthreonine. Thr-2 carries the post-translational modification Phosphothreonine. 3 helical membrane passes run 29 to 46 (YIGWFGVIMIPCLLTATS), 118 to 133 (HFLLGVACYMGREWEL), and 142 to 156 (WIAVAYSAPVAAATA). His-118 lines the chlorophyll a pocket. Tyr-126 lines the pheophytin a pocket. 2 residues coordinate [CaMn4O5] cluster: Asp-170 and Glu-189. Residues 197-218 (FHMLGVAGVFGGSLFSAMHGSL) traverse the membrane as a helical segment. His-198 is a binding site for chlorophyll a. Residues His-215 and 264–265 (SF) each bind a quinone. His-215 is a binding site for Fe cation. Residue His-272 participates in Fe cation binding. A helical membrane pass occupies residues 274-288 (FLAAWPVVGIWFTAL). 4 residues coordinate [CaMn4O5] cluster: His-332, Glu-333, Asp-342, and Ala-344. The propeptide occupies 345-353 (SVEAPSVNA).

This sequence belongs to the reaction center PufL/M/PsbA/D family. PSII is composed of 1 copy each of membrane proteins PsbA, PsbB, PsbC, PsbD, PsbE, PsbF, PsbH, PsbI, PsbJ, PsbK, PsbL, PsbM, PsbT, PsbX, PsbY, PsbZ, Psb30/Ycf12, at least 3 peripheral proteins of the oxygen-evolving complex and a large number of cofactors. It forms dimeric complexes. Requires The D1/D2 heterodimer binds P680, chlorophylls that are the primary electron donor of PSII, and subsequent electron acceptors. It shares a non-heme iron and each subunit binds pheophytin, quinone, additional chlorophylls, carotenoids and lipids. D1 provides most of the ligands for the Mn4-Ca-O5 cluster of the oxygen-evolving complex (OEC). There is also a Cl(-1) ion associated with D1 and D2, which is required for oxygen evolution. The PSII complex binds additional chlorophylls, carotenoids and specific lipids. as cofactor. Tyr-161 forms a radical intermediate that is referred to as redox-active TyrZ, YZ or Y-Z. In terms of processing, C-terminally processed by CTPA; processing is essential to allow assembly of the oxygen-evolving complex and thus photosynthetic growth.

It localises to the plastid. Its subcellular location is the chloroplast thylakoid membrane. The enzyme catalyses 2 a plastoquinone + 4 hnu + 2 H2O = 2 a plastoquinol + O2. Its function is as follows. Photosystem II (PSII) is a light-driven water:plastoquinone oxidoreductase that uses light energy to abstract electrons from H(2)O, generating O(2) and a proton gradient subsequently used for ATP formation. It consists of a core antenna complex that captures photons, and an electron transfer chain that converts photonic excitation into a charge separation. The D1/D2 (PsbA/PsbD) reaction center heterodimer binds P680, the primary electron donor of PSII as well as several subsequent electron acceptors. This chain is Photosystem II protein D1, found in Oltmannsiellopsis viridis (Marine flagellate).